The following is a 130-amino-acid chain: Large-conductance mechanosensitive channel (130 aa).

Residues 1–14 (MWNEFKAFAMRGNI) lie on the Cytoplasmic side of the membrane. Residues 15 to 43 (VDLAIGVVIGGAFGKIVTSLVNDIIMPLV) form a helical membrane-spanning segment. Over 44–65 (GLLLGGLDFSGLSFTFGDAVVK) the chain is Extracellular. A helical transmembrane segment spans residues 66 to 85 (YGSFIQTIVNFLIISFSIFI). Residues 86–130 (VIRTLNGLRRKKEAEEEAAEEAVDAQEELLKEIRDLLKQQAKSPE) lie on the Cytoplasmic side of the membrane.

This sequence belongs to the MscL family. Homopentamer.

Its subcellular location is the cell membrane. Functionally, channel that opens in response to stretch forces in the membrane lipid bilayer. Forms a nonselective ion channel with a conductance of about 4 nanosiemens. May participate in the regulation of osmotic pressure changes within the cell. This Bacillus subtilis (strain 168) protein is Large-conductance mechanosensitive channel.